Reading from the N-terminus, the 133-residue chain is Ribosome-binding factor A (133 aa).

The protein belongs to the RbfA family. In terms of assembly, monomer. Binds 30S ribosomal subunits, but not 50S ribosomal subunits or 70S ribosomes.

Its subcellular location is the cytoplasm. In terms of biological role, one of several proteins that assist in the late maturation steps of the functional core of the 30S ribosomal subunit. Associates with free 30S ribosomal subunits (but not with 30S subunits that are part of 70S ribosomes or polysomes). Required for efficient processing of 16S rRNA. May interact with the 5'-terminal helix region of 16S rRNA. This chain is Ribosome-binding factor A, found in Pseudomonas fluorescens (strain Pf0-1).